We begin with the raw amino-acid sequence, 421 residues long: MQTTHLTETHFADLPINEQVVKALSAANFSHCTPIQALSLPPLLEGNDIAGQAQTGTGKTIAFLVATFHYLLSNPQPTKKQPRAIIMAPTRELAVQIFNDAELLSQHTGLSLGLIYGGEGYQSQREKLEEGVDIIIGTTGRIIDYYKQNIFSLAGIQVAVLDEADRMFDLGFIKDIRYLFNRMPKPTERLSMLFSATLSYRVQELAYEHMDNPTHVQVEPERKTGTRIKEELFYPSDEDKMALLLSLMEEEWPDKAIVFANTKHSCEKVADWLQADGHRVGLLSGDVPQNKRLKILEDFTSGKLDILVATDVAARGLHIPMVSHVFNYDLPDDAEDYVHRIGRTGRAGQSGSSISFACERYALNLPAIETYIEHAIPVTEYQADALLRDVTPPKPRHKKRMQNGRNPQKRQSSGSRNRRKP.

Residues 9-37 (THFADLPINEQVVKALSAANFSHCTPIQA) carry the Q motif motif. The region spanning 40–216 (LPPLLEGNDI…YEHMDNPTHV (177 aa)) is the Helicase ATP-binding domain. 53–60 (AQTGTGKT) provides a ligand contact to ATP. The DEAD box motif lies at 162–165 (DEAD). A Helicase C-terminal domain is found at 240-387 (KMALLLSLME…VTEYQADALL (148 aa)). A disordered region spans residues 389–421 (DVTPPKPRHKKRMQNGRNPQKRQSSGSRNRRKP). Polar residues predominate over residues 403–415 (NGRNPQKRQSSGS).

It belongs to the DEAD box helicase family. RhlB subfamily. In terms of assembly, component of the RNA degradosome, which is a multiprotein complex involved in RNA processing and mRNA degradation.

The protein localises to the cytoplasm. The enzyme catalyses ATP + H2O = ADP + phosphate + H(+). Its function is as follows. DEAD-box RNA helicase involved in RNA degradation. Has RNA-dependent ATPase activity and unwinds double-stranded RNA. This Pseudoalteromonas atlantica (strain T6c / ATCC BAA-1087) protein is ATP-dependent RNA helicase RhlB.